A 738-amino-acid polypeptide reads, in one-letter code: Protostadienol synthase A (738 aa).

Residues 132-173 form a PFTB 1 repeat; it reads KQEMCRYLLNVVNEDGGWGLFIQSPSTVFGTVMNYCMLRILG. Asp-463 (proton donor) is an active-site residue. PFTB repeat units lie at residues 490 to 531, 567 to 607, and 616 to 663; these read LQQA…YENV, VSRS…ACMG, and CQRA…AVIG.

The protein belongs to the terpene cyclase/mutase family.

The catalysed reaction is (S)-2,3-epoxysqualene = (17Z)-protosta-17(20),24-dien-3beta-ol. In terms of biological role, protostadienol synthase which cyclizes (3S)-oxidosqualene to (17Z)-protosta-17(20),24-dien-3-beta-ol (protostadienol), the biosynthetic precursor of helvolic acid, a secondary metabolite which promotes virulence. The chain is Protostadienol synthase A (pdsA) from Neosartorya fischeri (strain ATCC 1020 / DSM 3700 / CBS 544.65 / FGSC A1164 / JCM 1740 / NRRL 181 / WB 181) (Aspergillus fischerianus).